The primary structure comprises 541 residues: Transcription termination factor MTERF4, chloroplastic (541 aa).

A chloroplast-targeting transit peptide spans 1 to 45 (MKIRFCNGFTKPGFLLVHFEPPSFFAVRSRSLSDSTYGNLCNHKK). Disordered regions lie at residues 66 to 103 (SRSL…SLYS) and 503 to 541 (EVET…EEFA). A compositionally biased stretch (basic and acidic residues) spans 85–99 (GRDRDRDKDKGRDSK). Over residues 507–517 (DPSSFDMNTLM) the composition is skewed to polar residues. Residues 521-541 (REEESDSEYEEEEDDDDEEFA) show a composition bias toward acidic residues.

The protein belongs to the mTERF family.

It is found in the plastid. The protein resides in the chloroplast. It localises to the mitochondrion. In terms of biological role, transcription termination factor required for processing and steady-state levels of plastid transcripts. Required for splicing of the chloroplastic Clp protease (ClpP) group IIa intron. Required for maturation of 16S rRNA and 23S rRNA in the chloroplast. Essential for embryogenesis. Required for the maintenance of the correct levels of transcripts in the mitochondria and chloroplasts. This Arabidopsis thaliana (Mouse-ear cress) protein is Transcription termination factor MTERF4, chloroplastic.